The chain runs to 281 residues: Digeranylgeranylglyceryl phosphate synthase (281 aa).

5 consecutive transmembrane segments (helical) span residues 88-108 (IALSLFGIALSIFLGFIEFLI), 132-152 (ALVSLGVAFTLIFGSLAAGNL), 200-220 (GILVFLLSLATVVLTILPVIF), 225-245 (IIYLSLSVIISLPILMLASAI), and 261-281 (LIKVSMFLGLLGMLLDPFRVV).

It belongs to the UbiA prenyltransferase family. DGGGP synthase subfamily. Mg(2+) is required as a cofactor.

It is found in the cell membrane. It carries out the reaction sn-3-O-(geranylgeranyl)glycerol 1-phosphate + (2E,6E,10E)-geranylgeranyl diphosphate = 2,3-bis-O-(geranylgeranyl)-sn-glycerol 1-phosphate + diphosphate. It functions in the pathway membrane lipid metabolism; glycerophospholipid metabolism. In terms of biological role, prenyltransferase that catalyzes the transfer of the geranylgeranyl moiety of geranylgeranyl diphosphate (GGPP) to the C2 hydroxyl of (S)-3-O-geranylgeranylglyceryl phosphate (GGGP). This reaction is the second ether-bond-formation step in the biosynthesis of archaeal membrane lipids. This Korarchaeum cryptofilum (strain OPF8) protein is Digeranylgeranylglyceryl phosphate synthase.